The sequence spans 467 residues: Chromosomal replication initiator protein DnaA (467 aa).

Residues 1–90 (MSLSLWQQCL…KPVTQTPQAA (90 aa)) are domain I, interacts with DnaA modulators. The segment at 91-130 (VTSNVAAPAQVAQTQPQRAAPSTRSGWDNVPAPAEPTYRS) is domain II. Over residues 98–111 (PAQVAQTQPQRAAP) the composition is skewed to low complexity. The interval 98-119 (PAQVAQTQPQRAAPSTRSGWDN) is disordered. The segment at 131–347 (NVNVKHTFDN…GALNRVIANA (217 aa)) is domain III, AAA+ region. 4 residues coordinate ATP: G175, G177, K178, and T179. Positions 348 to 467 (NFTGRAITID…FSNLIRTLSS (120 aa)) are domain IV, binds dsDNA.

The protein belongs to the DnaA family. Oligomerizes as a right-handed, spiral filament on DNA at oriC.

It localises to the cytoplasm. Functionally, plays an essential role in the initiation and regulation of chromosomal replication. ATP-DnaA binds to the origin of replication (oriC) to initiate formation of the DNA replication initiation complex once per cell cycle. Binds the DnaA box (a 9 base pair repeat at the origin) and separates the double-stranded (ds)DNA. Forms a right-handed helical filament on oriC DNA; dsDNA binds to the exterior of the filament while single-stranded (ss)DNA is stabiized in the filament's interior. The ATP-DnaA-oriC complex binds and stabilizes one strand of the AT-rich DNA unwinding element (DUE), permitting loading of DNA polymerase. After initiation quickly degrades to an ADP-DnaA complex that is not apt for DNA replication. Binds acidic phospholipids. This chain is Chromosomal replication initiator protein DnaA, found in Shigella sonnei (strain Ss046).